Consider the following 251-residue polypeptide: Hydroxypyruvate/pyruvate aldolase (251 aa).

The active-site Proton acceptor is His44. Arg69 is a 3-hydroxypyruvate binding site. Glu145 is a binding site for Mg(2+). Residues Thr170 and Asp171 each coordinate 3-hydroxypyruvate. Asp171 contributes to the Mg(2+) binding site.

Belongs to the HpcH/HpaI aldolase family. Homohexamer. Trimer of homodimers. The cofactor is Mn(2+). It depends on Mg(2+) as a cofactor. Requires Co(2+) as cofactor. Zn(2+) is required as a cofactor.

The enzyme catalyses D-glyceraldehyde + 3-hydroxypyruvate = 2-dehydro-D-galactonate. It carries out the reaction D-glyceraldehyde + pyruvate = 2-dehydro-3-deoxy-L-galactonate. It catalyses the reaction L-glyceraldehyde + 3-hydroxypyruvate = (3S,4S,5S)-3,4,5,6-tetrahydroxy-2-oxohexanoate. The catalysed reaction is (R)-lactaldehyde + 3-hydroxypyruvate = (3S,4S,5R)-3,4,5-trihydroxy-2-oxohexanoate. The enzyme catalyses (R)-lactaldehyde + 3-hydroxypyruvate = (3S,4R,5R)-3,4,5-trihydroxy-2-oxohexanoate. It carries out the reaction (S)-lactaldehyde + 3-hydroxypyruvate = (3S,4S,5S)-3,4,5-trihydroxy-2-oxohexanoate. It catalyses the reaction D-erythrose + 3-hydroxypyruvate = (3S,4S,5R,6R)-3,4,5,6,7-pentahydroxy-2-oxoheptanoate. With respect to regulation, binding of substrate induces a dynamic movement of the metal cofactor between an inactive coordination sphere to a catalytically active one. When oxaloacetate is used as substrate, activity is increased in the presence of micromolar concentrations of inorganic phosphate. The phosphate does not improve the binding of the substrate, but exclusively increases its rate of decarboxylation. Excessive phosphate concentrations negatively affect the reaction rate by removing the metal cofactor. Functionally, aldolase which can catalyze in vitro the aldolisation reaction between hydroxypyruvate (HPA) or pyruvate (PA) and D-glyceraldehyde (D-GA). The condensation of hydroxypyruvate and D-glyceraldehyde produces 2-dehydro-D-galactonate as the major product. The condensation of pyruvate and D-glyceraldehyde produces 2-dehydro-3-deoxy-L-galactonate. Can use other electrophilic substrates such as L-glyceraldehyde, D- and L-lactaldehyde and D-erythrose. Also catalyzes the retro-aldol type decarboxylation of oxaloacetate, a general property of known pyruvate aldolases. The chain is Hydroxypyruvate/pyruvate aldolase from Rhizorhabdus wittichii (strain DSM 6014 / CCUG 31198 / JCM 15750 / NBRC 105917 / EY 4224 / RW1) (Sphingomonas wittichii).